The chain runs to 86 residues: Weak neurotoxin WNTX34 (86 aa).

Residues Met-1–Ser-21 form the signal peptide. 5 disulfide bridges follow: Cys-24-Cys-45, Cys-27-Cys-32, Cys-38-Cys-63, Cys-67-Cys-78, and Cys-79-Cys-84.

This sequence belongs to the three-finger toxin family. Ancestral subfamily. Orphan group II sub-subfamily. As to expression, expressed by the venom gland.

It is found in the secreted. Its function is as follows. Binds with low affinity to muscular (alpha-1-beta-1-delta-epsilon/CHRNA1-CHRNB1-CHRND-CHRNE) and very low affinity to neuronal (alpha-7/CHRNA7) nicotinic acetylcholine receptor (nAChR). The polypeptide is Weak neurotoxin WNTX34 (Ophiophagus hannah (King cobra)).